The sequence spans 224 residues: ATP synthase subunit a (224 aa).

A run of 6 helical transmembrane segments spans residues 17–37, 78–98, 104–124, 136–156, 176–196, and 201–221; these read FIYM…VKMA, LVAT…VPGF, FLEF…YEGI, FLGP…VSHF, FLMV…YALL, and FLQA…AIAV.

It belongs to the ATPase A chain family. As to quaternary structure, F-type ATPases have 2 components, CF(1) - the catalytic core - and CF(0) - the membrane proton channel. CF(1) has five subunits: alpha(3), beta(3), gamma(1), delta(1), epsilon(1). CF(0) has three main subunits: a(1), b(2) and c(9-12). The alpha and beta chains form an alternating ring which encloses part of the gamma chain. CF(1) is attached to CF(0) by a central stalk formed by the gamma and epsilon chains, while a peripheral stalk is formed by the delta and b chains.

The protein resides in the cell inner membrane. Functionally, key component of the proton channel; it plays a direct role in the translocation of protons across the membrane. The chain is ATP synthase subunit a from Sulfurimonas denitrificans (strain ATCC 33889 / DSM 1251) (Thiomicrospira denitrificans (strain ATCC 33889 / DSM 1251)).